Consider the following 406-residue polypeptide: Argininosuccinate synthase (406 aa).

Residues 13–21 (AYSGGLDTS) and A40 each bind ATP. Y91 and S96 together coordinate L-citrulline. G121 is an ATP binding site. L-aspartate contacts are provided by T123, N127, and D128. Residue N127 participates in L-citrulline binding. 5 residues coordinate L-citrulline: R131, S182, S191, E267, and Y279.

The protein belongs to the argininosuccinate synthase family. Type 1 subfamily. As to quaternary structure, homotetramer.

It localises to the cytoplasm. The enzyme catalyses L-citrulline + L-aspartate + ATP = 2-(N(omega)-L-arginino)succinate + AMP + diphosphate + H(+). It participates in amino-acid biosynthesis; L-arginine biosynthesis; L-arginine from L-ornithine and carbamoyl phosphate: step 2/3. The sequence is that of Argininosuccinate synthase from Brucella anthropi (strain ATCC 49188 / DSM 6882 / CCUG 24695 / JCM 21032 / LMG 3331 / NBRC 15819 / NCTC 12168 / Alc 37) (Ochrobactrum anthropi).